Consider the following 202-residue polypeptide: Probable nicotinate-nucleotide adenylyltransferase (202 aa).

This sequence belongs to the NadD family.

The enzyme catalyses nicotinate beta-D-ribonucleotide + ATP + H(+) = deamido-NAD(+) + diphosphate. It functions in the pathway cofactor biosynthesis; NAD(+) biosynthesis; deamido-NAD(+) from nicotinate D-ribonucleotide: step 1/1. In terms of biological role, catalyzes the reversible adenylation of nicotinate mononucleotide (NaMN) to nicotinic acid adenine dinucleotide (NaAD). The sequence is that of Probable nicotinate-nucleotide adenylyltransferase from Clostridium perfringens (strain 13 / Type A).